The sequence spans 204 residues: 8-oxoguanine DNA glycosylase/AP lyase (204 aa).

Residues Lys-129 and Asp-147 contribute to the active site.

It belongs to the type-2 OGG1 family.

The catalysed reaction is 2'-deoxyribonucleotide-(2'-deoxyribose 5'-phosphate)-2'-deoxyribonucleotide-DNA = a 3'-end 2'-deoxyribonucleotide-(2,3-dehydro-2,3-deoxyribose 5'-phosphate)-DNA + a 5'-end 5'-phospho-2'-deoxyribonucleoside-DNA + H(+). Functionally, catalyzes the excision of an oxidatively damaged form of guanine (7,8-dihydro-8-oxoguanine = 8-oxoG) from DNA. Also cleaves the DNA backbone at apurinic/apyrimidinic sites (AP sites). The polypeptide is 8-oxoguanine DNA glycosylase/AP lyase (Thermoplasma acidophilum (strain ATCC 25905 / DSM 1728 / JCM 9062 / NBRC 15155 / AMRC-C165)).